A 323-amino-acid polypeptide reads, in one-letter code: Elongation factor P--(R)-beta-lysine ligase (323 aa).

76-78 (SPE) provides a ligand contact to substrate. Residues 100–102 (RNE) and asparagine 109 contribute to the ATP site. Tyrosine 118 contributes to the substrate binding site. Residue 242 to 243 (EL) coordinates ATP. Glutamate 249 contacts substrate. Residue glycine 298 participates in ATP binding.

It belongs to the class-II aminoacyl-tRNA synthetase family. EpmA subfamily. In terms of assembly, homodimer.

It carries out the reaction D-beta-lysine + L-lysyl-[protein] + ATP = N(6)-((3R)-3,6-diaminohexanoyl)-L-lysyl-[protein] + AMP + diphosphate + H(+). Its function is as follows. With EpmB is involved in the beta-lysylation step of the post-translational modification of translation elongation factor P (EF-P). Catalyzes the ATP-dependent activation of (R)-beta-lysine produced by EpmB, forming a lysyl-adenylate, from which the beta-lysyl moiety is then transferred to the epsilon-amino group of a conserved specific lysine residue in EF-P. The polypeptide is Elongation factor P--(R)-beta-lysine ligase (Actinobacillus succinogenes (strain ATCC 55618 / DSM 22257 / CCUG 43843 / 130Z)).